A 418-amino-acid polypeptide reads, in one-letter code: Serine--tRNA ligase (418 aa).

228-230 is a binding site for L-serine; that stretch reads TSE. Residues 258–260 and Val274 contribute to the ATP site; that span reads RKE. Glu281 is an L-serine binding site. An ATP-binding site is contributed by 345–348; the sequence is EVVS. Thr381 provides a ligand contact to L-serine.

The protein belongs to the class-II aminoacyl-tRNA synthetase family. Type-1 seryl-tRNA synthetase subfamily. In terms of assembly, homodimer. The tRNA molecule binds across the dimer.

The protein localises to the cytoplasm. It carries out the reaction tRNA(Ser) + L-serine + ATP = L-seryl-tRNA(Ser) + AMP + diphosphate + H(+). The catalysed reaction is tRNA(Sec) + L-serine + ATP = L-seryl-tRNA(Sec) + AMP + diphosphate + H(+). It participates in aminoacyl-tRNA biosynthesis; selenocysteinyl-tRNA(Sec) biosynthesis; L-seryl-tRNA(Sec) from L-serine and tRNA(Sec): step 1/1. Its function is as follows. Catalyzes the attachment of serine to tRNA(Ser). Is also able to aminoacylate tRNA(Sec) with serine, to form the misacylated tRNA L-seryl-tRNA(Sec), which will be further converted into selenocysteinyl-tRNA(Sec). The polypeptide is Serine--tRNA ligase (Cenarchaeum symbiosum (strain A)).